The primary structure comprises 950 residues: Defective chorion protein, FC106 isoform (950 aa).

Residues 1–19 (MRLFSLLPLLALLVVQAAG) form the signal peptide. Disordered regions lie at residues 23 to 60 (VTSD…PSIN), 184 to 212 (APAP…PDAP), and 268 to 294 (PAQP…EDPY). The span at 32 to 41 (AGSTTNSTTD) shows a compositional bias: polar residues. Over residues 268–280 (PAQPAAAGTDAQA) the composition is skewed to low complexity. 5 repeat units span residues 493-518 (QNPM…QQIQ), 519-544 (QNPM…QQIQ), 545-570 (QNPM…QQIQ), 571-596 (QNPM…QQIQ), and 597-622 (QNPM…QQIQ). Positions 493–788 (QNPMMMQQRQ…IQQQQRQMMQ (296 aa)) are 12 X 26 AA approximate tandem repeats, Glu, Met-rich. Residues 623 to 652 (QNPMMMQQRQWSEEQAKIQHDQQMAQQMAQ) form a 6; approximate repeat. The 7; approximate repeat unit spans residues 653–680 (QGLMMTEQRQRQWSEDQAKIQQAQQMAQ). The stretch at 681–696 (QTPMMMPQMQQRQWTE) is one 8; approximate repeat. The 9; approximate repeat unit spans residues 697 to 720 (DPQMVQQMQQRQWAEDQTRMQMAQ). A 10; approximate repeat occupies 721–733 (QNPMMQQQRQMAE). An 11; approximate repeat occupies 734-758 (NPQMMQQRQWSEEQTKIEQAQQMAQ). A 12; approximate repeat occupies 759-788 (QNQMMMQQMQQRQWSEDQAQIQQQQRQMMQ). The disordered stretch occupies residues 843-875 (GPQMPENEGTARHKVDALGVGGNKRKKSKSKSA).

Proteolytic cleavage of isoform FC106 generates 2 further products, S80 and S60.

The protein resides in the secreted. In terms of biological role, required for proper assembly of the eggshell. The protein is Defective chorion protein, FC106 isoform of Drosophila melanogaster (Fruit fly).